A 581-amino-acid polypeptide reads, in one-letter code: Sodium/hydrogen exchanger 8 (581 aa).

A run of 11 helical transmembrane segments spans residues 60-80 (MTIF…HLLI), 84-104 (LHFL…GAVI), 123-143 (PNMF…YSLH), 156-176 (LFAV…IYFL), 191-211 (FAFG…IFNA), 264-284 (FLKM…ISAL), 311-331 (GLAE…GIVM), 354-374 (VAFL…FSFP), 379-399 (ISFV…NIFP), 417-437 (MFIM…SLHL), and 451-471 (TTIV…MPLI). Thr-510 carries the phosphothreonine modification. Residues Ser-571 and Ser-573 each carry the phosphoserine modification.

Belongs to the monovalent cation:proton antiporter 1 (CPA1) transporter (TC 2.A.36) family. In terms of tissue distribution, ubiquitous. Strongly expressed in skeletal muscle and kidney. Detected throughout the entire gastrointestinal tract, with high expression detected in stomach, duodenum and ascending colon.

It is found in the golgi apparatus membrane. It localises to the golgi apparatus. Its subcellular location is the trans-Golgi network membrane. The protein resides in the endosome. The protein localises to the multivesicular body membrane. It is found in the apical cell membrane. It localises to the cytoplasmic vesicle. Its subcellular location is the secretory vesicle. The protein resides in the acrosome. The enzyme catalyses Na(+)(in) + H(+)(out) = Na(+)(out) + H(+)(in). Its activity is regulated as follows. HOE642 inhibits SLC9A8 activity. In terms of biological role, na(+)/H(+) antiporter. Mediates the electoneutral exchange of intracellular H(+) ions for extracellular Na(+) in 1:1 stoichiometry. Acts as an Na(+)/H(+) exchanger in the trans-Golgi. Contributes to the regulation of pH regulation of Golgi apparatus, and consequently, in protein trafficking and endosomal morphology. In germ cells, plays a crucial role in acrosome biogenesis and sperm development, probably by playing a role in the fusion of the Golgi-derived vesicles that form the acrosomal cap. Can also be active at the cell surface of specialized cells. In the small intestine, at the cell membrane, plays a major physiological role in transepithelial absorption of Na(+) and regulates intracellular pH homeostasis of intestinal epithelial cells. Acts as an important regulator of mucosal integrity in the intestine and in the stomach, could mediate the pH fluctuation necessary for mucin exocytosis or assist membrane trafficking of other proteins. Plays a role in photoreceptor survival and in the maintenance of intracellular pH homeostasis in retinal pigment epithelium (RPE cells). This Homo sapiens (Human) protein is Sodium/hydrogen exchanger 8.